We begin with the raw amino-acid sequence, 384 residues long: Galactokinase (384 aa).

34-37 (EHTD) contributes to the substrate binding site. 123–129 (SSGLSSS) is an ATP binding site. Mg(2+) is bound by residues Ser-129 and Glu-161. Catalysis depends on Asp-173, which acts as the Proton acceptor. Tyr-222 provides a ligand contact to substrate.

The protein belongs to the GHMP kinase family. GalK subfamily.

Its subcellular location is the cytoplasm. It catalyses the reaction alpha-D-galactose + ATP = alpha-D-galactose 1-phosphate + ADP + H(+). It functions in the pathway carbohydrate metabolism; galactose metabolism. In terms of biological role, catalyzes the transfer of the gamma-phosphate of ATP to D-galactose to form alpha-D-galactose-1-phosphate (Gal-1-P). This chain is Galactokinase, found in Actinobacillus pleuropneumoniae serotype 5b (strain L20).